The primary structure comprises 677 residues: DNA ligase (677 aa).

Residues 35–39, 84–85, and Glu-115 each bind NAD(+); these read DAVYD and SL. Residue Lys-117 is the N6-AMP-lysine intermediate of the active site. The NAD(+) site is built by Arg-138, Glu-177, Lys-296, and Lys-320. The Zn(2+) site is built by Cys-414, Cys-417, Cys-432, and Cys-437. A BRCT domain is found at 599–677; that stretch reads NGILKLNGKT…ETQLLEILEE (79 aa).

Belongs to the NAD-dependent DNA ligase family. LigA subfamily. Mg(2+) is required as a cofactor. The cofactor is Mn(2+).

The catalysed reaction is NAD(+) + (deoxyribonucleotide)n-3'-hydroxyl + 5'-phospho-(deoxyribonucleotide)m = (deoxyribonucleotide)n+m + AMP + beta-nicotinamide D-nucleotide.. Its function is as follows. DNA ligase that catalyzes the formation of phosphodiester linkages between 5'-phosphoryl and 3'-hydroxyl groups in double-stranded DNA using NAD as a coenzyme and as the energy source for the reaction. It is essential for DNA replication and repair of damaged DNA. In Nostoc sp. (strain PCC 7120 / SAG 25.82 / UTEX 2576), this protein is DNA ligase.